We begin with the raw amino-acid sequence, 152 residues long: Clitocypin-2 (152 aa).

The protein belongs to the protease inhibitor I48 family. In terms of assembly, homodimer. In terms of tissue distribution, expressed in all analyzed tissues, but expression was higher in the pileus and in the lower part of the stipe.

Binds and inhibits cysteine proteinases. Inhibits most strongly papain and cathepsin L, more weakly bromelain and cathepsin B while it is completely ineffective against cathepsin H. The chain is Clitocypin-2 (clt2) from Clitocybe nebularis (Clouded agaric).